Here is a 286-residue protein sequence, read N- to C-terminus: Bifunctional protein FolD (286 aa).

Residues Gly-165–Ser-167, Ser-190, and Val-231 contribute to the NADP(+) site.

This sequence belongs to the tetrahydrofolate dehydrogenase/cyclohydrolase family. Homodimer.

It carries out the reaction (6R)-5,10-methylene-5,6,7,8-tetrahydrofolate + NADP(+) = (6R)-5,10-methenyltetrahydrofolate + NADPH. The catalysed reaction is (6R)-5,10-methenyltetrahydrofolate + H2O = (6R)-10-formyltetrahydrofolate + H(+). Its pathway is one-carbon metabolism; tetrahydrofolate interconversion. Its function is as follows. Catalyzes the oxidation of 5,10-methylenetetrahydrofolate to 5,10-methenyltetrahydrofolate and then the hydrolysis of 5,10-methenyltetrahydrofolate to 10-formyltetrahydrofolate. The protein is Bifunctional protein FolD of Bacillus cereus (strain AH187).